A 500-amino-acid chain; its full sequence is Histidine ammonia-lyase (500 aa).

A cross-link (5-imidazolinone (Ala-Gly)) is located at residues 142–144 (ASG). Serine 143 is subject to 2,3-didehydroalanine (Ser).

It belongs to the PAL/histidase family. Post-translationally, contains an active site 4-methylidene-imidazol-5-one (MIO), which is formed autocatalytically by cyclization and dehydration of residues Ala-Ser-Gly.

The protein localises to the cytoplasm. It carries out the reaction L-histidine = trans-urocanate + NH4(+). Its pathway is amino-acid degradation; L-histidine degradation into L-glutamate; N-formimidoyl-L-glutamate from L-histidine: step 1/3. The chain is Histidine ammonia-lyase from Macrococcus caseolyticus (strain JCSC5402) (Macrococcoides caseolyticum).